Consider the following 112-residue polypeptide: UPF0342 protein SSA_1465 (112 aa).

This sequence belongs to the UPF0342 family.

The protein is UPF0342 protein SSA_1465 of Streptococcus sanguinis (strain SK36).